The sequence spans 344 residues: MNHAITMGIFWHLIGAASAACFYAPFKKVKHWSWETMWSVGGIVSWLILPWAISATLLPDFWAYYRSFNASTLLPVFLFGAMWGIGNINYGLTMRYLGMSMGIGIAIGITLIVGTLMTPIINGQFSVLMHTQGGQMTLLGVLVAVIGVGIVTRAGQLKERKMGIKAEEFNLKKGLLLAVMCGIFSAGMSFAMNAAKPMHDAAAALGVDPLYAALPSYVVIMGGGALVNLGFCFIRLAKVKNLSVKADFSLAKPLIISNLLLSALGGLMWYLQFFFYAWGHASIPAQYDYMSWMLHMSFYVLCGGLVGLVLKEWNNAGRRPVSVLSLGCVVIIIAANIVGLGMAS.

Helical transmembrane passes span 4–24 (AITMGIFWHLIGAASAACFYA), 38–58 (WSVGGIVSWLILPWAISATLL), 72–92 (TLLPVFLFGAMWGIGNINYGL), 101–121 (MGIGIAIGITLIVGTLMTPII), 131–151 (TQGGQMTLLGVLVAVIGVGIV), 175–195 (LLLAVMCGIFSAGMSFAMNAA), 214–234 (LPSYVVIMGGGALVNLGFCFI), 259–279 (LLLSALGGLMWYLQFFFYAWG), 290–310 (MSWMLHMSFYVLCGGLVGLVL), and 323–343 (VLSLGCVVIIIAANIVGLGMA).

The protein belongs to the L-rhamnose transporter (TC 2.A.7.6) family.

The protein resides in the cell inner membrane. The enzyme catalyses L-rhamnopyranose(in) + H(+)(in) = L-rhamnopyranose(out) + H(+)(out). Functionally, uptake of L-rhamnose across the cytoplasmic membrane with the concomitant transport of protons into the cell (symport system). The polypeptide is L-rhamnose-proton symporter (Klebsiella pneumoniae (strain 342)).